The sequence spans 310 residues: MVMKFLIVGVGAIGSAYLAFLTRAGHEAAGLVRRNPVNRIKVEGIWGEFEIPVKTFTKVEEVPFIPDIVIISVKSYDTEEALKKVKPVVGENTFIMIAQNGYGNYEKAVEIYGEGKVILSRIIFGSKVIKPGHIRITVSADEVVIGDPSGKIDEEFLKNLARTFTEAGIPTRYERDVYKYLVDKIIYNSALNPLGALFEVNYGSLAENPHTKELMNRVIDEIFQVIEKAKLPCFWKSADEYKKVFYEKLIPPTAEHYPSMLEDVKKGKTEIEALNGAIVELGKKYGVSTPTNEFITKMVKAKELFNLKDT.

NADP(+)-binding positions include 9–14 (GVGAIG) and N100. N100 serves as a coordination point for substrate. K184 acts as the Proton donor in catalysis. 3 residues coordinate substrate: N188, N192, and S259. E270 provides a ligand contact to NADP(+).

Belongs to the ketopantoate reductase family.

The protein resides in the cytoplasm. It carries out the reaction (R)-pantoate + NADP(+) = 2-dehydropantoate + NADPH + H(+). Its pathway is cofactor biosynthesis; (R)-pantothenate biosynthesis; (R)-pantoate from 3-methyl-2-oxobutanoate: step 2/2. Its function is as follows. Catalyzes the NADPH-dependent reduction of ketopantoate into pantoic acid. In Aquifex aeolicus (strain VF5), this protein is 2-dehydropantoate 2-reductase.